The chain runs to 204 residues: WW domain-containing protein C11B10.08 (204 aa).

Residues 7–43 (EGLPNGWVAQWDERYKCYFYVNESDPKAKPQWECPVR) enclose the WW domain. Residues 32 to 117 (PKAKPQWECP…GYPQQPYYYP (86 aa)) form a disordered region. 2 stretches are compositionally biased toward low complexity: residues 66–100 (YSNS…GAAP) and 108–117 (GYPQQPYYYP).

It localises to the cytoplasm. It is found in the nucleus. The polypeptide is WW domain-containing protein C11B10.08 (Schizosaccharomyces pombe (strain 972 / ATCC 24843) (Fission yeast)).